A 115-amino-acid chain; its full sequence is Cyclin-dependent protein kinase inhibitor SMR3 (115 aa).

Residues 17–36 show a composition bias toward basic and acidic residues; sequence KIRLPTRPELDIPDSDHEDP. Residues 17–82 form a disordered region; sequence KIRLPTRPEL…RSSGTKRKLT (66 aa). Over residues 67-81 the composition is skewed to basic residues; that stretch reads RKPKPNRSSGTKRKL.

Interacts with CDKA-1 and D-type cyclins. As to expression, expressed at low levels in roots and stems.

Its subcellular location is the nucleus. Its function is as follows. Probable cyclin-dependent protein kinase (CDK) inhibitor that functions as a repressor of mitosis in the endoreduplication cell cycle. This chain is Cyclin-dependent protein kinase inhibitor SMR3, found in Arabidopsis thaliana (Mouse-ear cress).